The sequence spans 443 residues: Leucine-rich repeat-containing protein 17 (443 aa).

Residues 1-15 (MRIVAILLLFCLCRA) form the signal peptide. Residues 20-48 (KSSPGVLRSQGNPSRSHGRGGRRGSSPVK) form a disordered region. LRR repeat units follow at residues 84-105 (DLLH…MFAK), 108-129 (RLKS…AFFG), and 132-153 (KLTT…AFIY). Residues 165-216 (NPWHCTCELETLISMLQIPRNRNLGNYAKCGSPPALRNKKLLQLKPQELCDE) enclose the LRRCT 1 domain. One can recognise an LRRNT domain in the interval 229 to 270 (SGIPAVIRPEADSTLCHNYVFPIQTLDCKRKELKKVPSNIPP). LRR repeat units follow at residues 271 to 292 (DIVK…EFED), 295 to 316 (ELKK…AFLG), and 319 to 342 (HLEE…EDLY). The LRRCT 2 domain occupies 352–404 (NPWRCDYSIHYLYYWLKHHYNVHYNGLECKTPEEYKGWSVGKYVRSYYEECPK).

In terms of tissue distribution, expressed in osteoblasts, spleen, lung and heart.

The protein resides in the secreted. It is found in the extracellular space. In terms of biological role, involved in bone homeostasis. Acts as a negative regulator of RANKL-induced osteoclast precursor differentiation from bone marrow precursors. In Mus musculus (Mouse), this protein is Leucine-rich repeat-containing protein 17 (Lrrc17).